Reading from the N-terminus, the 477-residue chain is MKILFVAAEGAPFSKTGGLGDVIGALPKSLVKAGHEVAVILPYYDMVEAKFGNQIEDVLHFEVSVGWRRQYCGIKKTVLNGVTFYFIDNQYYFFRGHVYGDFDDGERFAFFQLAAIEAMERIDFIPDLLHVHDYHTAMIPFLLKEKYRWIQAYEDIETVLTIHNLEFQGQFSEGMLGDLFGVGFERYADGTLRWNNCLNWMKAGILYANRVSTVSPSYAHEIMTSQFGCNLDHILKMESGKVSGIVNGIDADLYNPQTDALLDYHFNQEDLSGKAKNKAKLQERVGLPVRADVPLVGIVSRLTRQKGFDVVVESLHHILQEDVQIVLLGTGDPAFEGAFSWFAQIYPDKLSTNITFDVKLAQEIYAACDLFLMPSRFEPCGLSQMMAMRYGTLPLVHEVGGLRDTVRAFNPIEGSGTGFSFDNLSPYWLNWTFQTALDLYRNHPDIWRNLQKQAMESDFSWDTACKSYLDLYHSLVN.

Lys-15 is an ADP-alpha-D-glucose binding site.

The protein belongs to the glycosyltransferase 1 family. Bacterial/plant glycogen synthase subfamily.

The enzyme catalyses [(1-&gt;4)-alpha-D-glucosyl](n) + ADP-alpha-D-glucose = [(1-&gt;4)-alpha-D-glucosyl](n+1) + ADP + H(+). It participates in glycan biosynthesis; glycogen biosynthesis. Synthesizes alpha-1,4-glucan chains using ADP-glucose. The polypeptide is Glycogen synthase (Streptococcus pneumoniae serotype 2 (strain D39 / NCTC 7466)).